The sequence spans 190 residues: Elongation factor P (190 aa).

The protein belongs to the elongation factor P family.

It is found in the cytoplasm. Its pathway is protein biosynthesis; polypeptide chain elongation. Functionally, involved in peptide bond synthesis. Stimulates efficient translation and peptide-bond synthesis on native or reconstituted 70S ribosomes in vitro. Probably functions indirectly by altering the affinity of the ribosome for aminoacyl-tRNA, thus increasing their reactivity as acceptors for peptidyl transferase. In Mycoplasma pneumoniae (strain ATCC 29342 / M129 / Subtype 1) (Mycoplasmoides pneumoniae), this protein is Elongation factor P (efp).